A 426-amino-acid chain; its full sequence is MKHLTEMVRQHKAGKTNGIYAVCSAHPLVLEAAIRYASANQTPLLIEATSNQVDQFGGYTGMTPADFRGFVCQLADSLNFPQDALILGGDHLGPNRWQNLPAAQAMANADDLIKSYVAAGFKKIHLDCSMSCQDDPIPLTDDIVAERAARLAKVAEETCLEHFGEADLEYVIGTEVPVPGGAHETLSELAVTTPDAARATLEAHRHAFEKQGLNAIWPRIIALVVQPGVEFDHTNVIDYQPAKASALSQMVENYETLIFEAHSTDYQTPQSLRQLVIDHFAILKVGPALTFALREALFSLAAIEEELVPAKACSGLRQVLEDVMLDRPEYWQSHYHGDGNARRLARGYSYSDRVRYYWPDSQIDDAFAHLVRNLADSPIPLPLISQYLPLQYVKVRSGELQPTPRELIINHIQDILAQYHTACEGQ.

Belongs to the GatZ/KbaZ family. KbaZ subfamily. As to quaternary structure, forms a complex with KbaY.

It participates in carbohydrate metabolism; D-tagatose 6-phosphate degradation; D-glyceraldehyde 3-phosphate and glycerone phosphate from D-tagatose 6-phosphate: step 2/2. Functionally, component of the tagatose-1,6-bisphosphate aldolase KbaYZ that is required for full activity and stability of the Y subunit. Could have a chaperone-like function for the proper and stable folding of KbaY. When expressed alone, KbaZ does not show any aldolase activity. In Escherichia coli (strain K12 / MC4100 / BW2952), this protein is D-tagatose-1,6-bisphosphate aldolase subunit KbaZ.